The primary structure comprises 470 residues: Argininosuccinate lyase (470 aa).

This sequence belongs to the lyase 1 family. Argininosuccinate lyase subfamily.

The protein localises to the cytoplasm. The enzyme catalyses 2-(N(omega)-L-arginino)succinate = fumarate + L-arginine. It participates in amino-acid biosynthesis; L-arginine biosynthesis; L-arginine from L-ornithine and carbamoyl phosphate: step 3/3. The protein is Argininosuccinate lyase of Mycobacterium sp. (strain MCS).